The following is a 262-amino-acid chain: Acyl-[acyl-carrier-protein]--UDP-N-acetylglucosamine O-acyltransferase (262 aa).

It belongs to the transferase hexapeptide repeat family. LpxA subfamily. In terms of assembly, homotrimer.

The protein resides in the cytoplasm. The catalysed reaction is a (3R)-hydroxyacyl-[ACP] + UDP-N-acetyl-alpha-D-glucosamine = a UDP-3-O-[(3R)-3-hydroxyacyl]-N-acetyl-alpha-D-glucosamine + holo-[ACP]. It participates in glycolipid biosynthesis; lipid IV(A) biosynthesis; lipid IV(A) from (3R)-3-hydroxytetradecanoyl-[acyl-carrier-protein] and UDP-N-acetyl-alpha-D-glucosamine: step 1/6. In terms of biological role, involved in the biosynthesis of lipid A, a phosphorylated glycolipid that anchors the lipopolysaccharide to the outer membrane of the cell. This Shigella boydii serotype 18 (strain CDC 3083-94 / BS512) protein is Acyl-[acyl-carrier-protein]--UDP-N-acetylglucosamine O-acyltransferase.